A 106-amino-acid polypeptide reads, in one-letter code: UPF0145 protein PP_2873 (106 aa).

It belongs to the UPF0145 family.

The polypeptide is UPF0145 protein PP_2873 (Pseudomonas putida (strain ATCC 47054 / DSM 6125 / CFBP 8728 / NCIMB 11950 / KT2440)).